The following is a 249-amino-acid chain: 15,16-dihydrobiliverdin:ferredoxin oxidoreductase (249 aa).

It belongs to the HY2 family.

It catalyses the reaction 15,16-dihydrobiliverdin + oxidized 2[4Fe-4S]-[ferredoxin] = biliverdin IXalpha + reduced 2[4Fe-4S]-[ferredoxin] + 2 H(+). Catalyzes the two-electron reduction of biliverdin IX-alpha at the C15 methine bridge. This chain is 15,16-dihydrobiliverdin:ferredoxin oxidoreductase, found in Prochlorococcus marinus (strain MIT 9303).